Consider the following 254-residue polypeptide: L-erythrulose-1-phosphate isomerase (254 aa).

Residue histidine 97 is the Electrophile of the active site. Catalysis depends on glutamate 170, which acts as the Proton acceptor. Substrate-binding residues include glycine 176 and serine 213.

The protein belongs to the triosephosphate isomerase family. As to quaternary structure, homodimer.

It localises to the cytoplasm. The enzyme catalyses L-erythrulose 1-phosphate = D-erythrulose 4-phosphate. The protein operates within carbohydrate metabolism; erythritol degradation. Functionally, catalyzes the isomerization of D-erythrulose-4P to L-erythrulose-1P. In Mesorhizobium japonicum (strain LMG 29417 / CECT 9101 / MAFF 303099) (Mesorhizobium loti (strain MAFF 303099)), this protein is L-erythrulose-1-phosphate isomerase.